The chain runs to 287 residues: Pyridoxal 5'-phosphate synthase subunit PdxS (287 aa).

D-ribose 5-phosphate is bound at residue aspartate 21. The active-site Schiff-base intermediate with D-ribose 5-phosphate is the lysine 78. Glycine 150 contributes to the D-ribose 5-phosphate binding site. Position 162 (arginine 162) interacts with D-glyceraldehyde 3-phosphate. D-ribose 5-phosphate contacts are provided by residues glycine 211 and 232 to 233 (GS).

This sequence belongs to the PdxS/SNZ family. In the presence of PdxT, forms a dodecamer of heterodimers.

The enzyme catalyses aldehydo-D-ribose 5-phosphate + D-glyceraldehyde 3-phosphate + L-glutamine = pyridoxal 5'-phosphate + L-glutamate + phosphate + 3 H2O + H(+). Its pathway is cofactor biosynthesis; pyridoxal 5'-phosphate biosynthesis. In terms of biological role, catalyzes the formation of pyridoxal 5'-phosphate from ribose 5-phosphate (RBP), glyceraldehyde 3-phosphate (G3P) and ammonia. The ammonia is provided by the PdxT subunit. Can also use ribulose 5-phosphate and dihydroxyacetone phosphate as substrates, resulting from enzyme-catalyzed isomerization of RBP and G3P, respectively. This chain is Pyridoxal 5'-phosphate synthase subunit PdxS, found in Tropheryma whipplei (strain TW08/27) (Whipple's bacillus).